The primary structure comprises 63 residues: Large ribosomal subunit protein bL28 (63 aa).

Residues 1–20 (MSKRCAITGKGPMVGNNVSH) are disordered.

This sequence belongs to the bacterial ribosomal protein bL28 family.

The sequence is that of Large ribosomal subunit protein bL28 from Campylobacter concisus (strain 13826).